Here is a 121-residue protein sequence, read N- to C-terminus: Small ribosomal subunit protein uS13 (121 aa).

The interval 97-121 is disordered; it reads VRGQRTRTNARTRRGARKTVAGKKK. Basic residues predominate over residues 100–121; it reads QRTRTNARTRRGARKTVAGKKK.

This sequence belongs to the universal ribosomal protein uS13 family. Part of the 30S ribosomal subunit. Forms a loose heterodimer with protein S19. Forms two bridges to the 50S subunit in the 70S ribosome.

Its function is as follows. Located at the top of the head of the 30S subunit, it contacts several helices of the 16S rRNA. In the 70S ribosome it contacts the 23S rRNA (bridge B1a) and protein L5 of the 50S subunit (bridge B1b), connecting the 2 subunits; these bridges are implicated in subunit movement. Contacts the tRNAs in the A and P-sites. The sequence is that of Small ribosomal subunit protein uS13 from Synechococcus sp. (strain CC9902).